The sequence spans 118 residues: Large ribosomal subunit protein bL20 (118 aa).

It belongs to the bacterial ribosomal protein bL20 family.

Binds directly to 23S ribosomal RNA and is necessary for the in vitro assembly process of the 50S ribosomal subunit. It is not involved in the protein synthesizing functions of that subunit. This Psychrobacter sp. (strain PRwf-1) protein is Large ribosomal subunit protein bL20.